The following is a 303-amino-acid chain: MEDYVKIEKIGEGTYGVVYKGRHKSTGQVVAMKKIRLESEEEGVPSTAVREVSLLQELKHPNVVRLLDVLMQESRLYLIFEFLSMDLKKYLDSIPSGQYMDPMLVKSYLYQILEGIYFCHRRRVLHRDLKPQNLLIDNKGVIKLADFGLARAFGVPVRVYTHEVVTLWYRAPEVLLGSPRYSTPVDVWSTGTIFAELATKKPLFHGDSEIDQLFRIFRTLGTPNNDVWPDVESLPDYKNTFPKWMEGSLSSMVKNLDKNGLDLLAKMLIYNPPKRISAREAMTHPYFDDLDKSTLPAACINGV.

The Protein kinase domain maps to Tyr4–Phe287. Residues Ile10 to Val18 and Lys33 contribute to the ATP site. The residue at position 14 (Thr14) is a Phosphothreonine. The residue at position 15 (Tyr15) is a Phosphotyrosine; by wee1 and wee2. Asp128 serves as the catalytic Proton acceptor. Thr161 is subject to Phosphothreonine; by cak.

The protein belongs to the protein kinase superfamily. CMGC Ser/Thr protein kinase family. CDC2/CDKX subfamily. In terms of assembly, forms a stable but non-covalent complex with cyclin B in mature oocytes. Post-translationally, phosphorylation at Tyr-15 by wee1 and wee2 inhibits the protein kinase activity and acts negative regulator of entry into mitosis (G2 to M transition).

The protein localises to the nucleus. It is found in the cytoplasm. Its subcellular location is the cytoskeleton. It localises to the microtubule organizing center. The protein resides in the centrosome. It carries out the reaction L-seryl-[protein] + ATP = O-phospho-L-seryl-[protein] + ADP + H(+). The catalysed reaction is L-threonyl-[protein] + ATP = O-phospho-L-threonyl-[protein] + ADP + H(+). The enzyme catalyses [DNA-directed RNA polymerase] + ATP = phospho-[DNA-directed RNA polymerase] + ADP + H(+). Its activity is regulated as follows. Phosphorylation at Thr-14 or Tyr-15 inactivates the enzyme, while phosphorylation at Thr-161 activates it. Functionally, plays a key role in the control of the eukaryotic cell cycle by modulating the centrosome cycle as well as mitotic onset; promotes G2-M transition via association with multiple interphase cyclins. During G2 and early mitosis, CDC25A/B/C-mediated dephosphorylation activates CDK1/cyclin complexes which phosphorylate several substrates that trigger at least centrosome separation, Golgi dynamics, nuclear envelope breakdown and chromosome condensation. Once chromosomes are condensed and aligned at the metaphase plate, CDK1 activity is switched off by WEE1- and PKMYT1-mediated phosphorylation to allow sister chromatid separation, chromosome decondensation, reformation of the nuclear envelope and cytokinesis. Catalyzes lamin (LMNA, LMNB1 and LMNB2) phosphorylation at the onset of mitosis, promoting nuclear envelope breakdown. The chain is Cyclin-dependent kinase 1 (cdk1) from Oryzias javanicus (Javanese ricefish).